Here is a 374-residue protein sequence, read N- to C-terminus: Guanine nucleotide-binding protein subunit alpha-15 (374 aa).

Residues 41 to 374 enclose the G-alpha domain; it reads GELKLLLLGP…ARYLDEINLL (334 aa). A G1 motif region spans residues 44–57; sequence KLLLLGPGESGKST. GTP contacts are provided by residues 49-56, 183-189, 208-212, 277-280, and A346; these read GPGESGKS, LRSRMPT, DVGGQ, and NKTD. S56 provides a ligand contact to Mg(2+). Positions 181-189 are G2 motif; sequence DVLRSRMPT. R186 is modified (ADP-ribosylarginine; by cholera toxin). Residue T189 coordinates Mg(2+). The tract at residues 204 to 213 is G3 motif; it reads LRIVDVGGQK. Residues 273-280 form a G4 motif region; it reads ILFLNKTD. A G5 motif region spans residues 344 to 349; sequence TCATDT.

The protein belongs to the G-alpha family. G(q) subfamily. In terms of assembly, g proteins are composed of 3 units; alpha, beta and gamma. The alpha chain contains the guanine nucleotide binding site. As to expression, specifically expressed in hematopoietic cells. Expressed in epididymis (at protein level).

Its function is as follows. Guanine nucleotide-binding proteins (G proteins) are involved as modulators or transducers in various transmembrane signaling systems. This chain is Guanine nucleotide-binding protein subunit alpha-15 (GNA15), found in Homo sapiens (Human).